Here is a 547-residue protein sequence, read N- to C-terminus: uncharacterized protein (547 aa).

Residues 1 to 21 are Extracellular-facing; sequence MVKKHQNSKMGNTNHFGHLKS. The helical transmembrane segment at 22–42 threads the bilayer; sequence FVGGNVVALGAGTPYLFSFYA. The Cytoplasmic segment spans residues 43–58; it reads PQLLSKCHIPVSASSK. The helical transmembrane segment at 59–79 threads the bilayer; sequence LSFSLTIGSSLMGILAGIVVD. The Extracellular portion of the chain corresponds to 80–83; that stretch reads RSPK. Residues 84–104 form a helical membrane-spanning segment; it reads LSCLIGSMCVFIAYLILNLCY. The Cytoplasmic segment spans residues 105 to 110; the sequence is KHEWSS. A helical membrane pass occupies residues 111-131; the sequence is TFLISLSLVLIGYGSVSGFYA. Residues 132–144 are Extracellular-facing; that stretch reads SVKCANTNFPQHR. Residues 145 to 165 traverse the membrane as a helical segment; the sequence is GTAGAFPVSLYGLSGMVFSYL. The Cytoplasmic portion of the chain corresponds to 166-175; the sequence is CSKLFGENIE. A helical transmembrane segment spans residues 176 to 196; the sequence is HVFIFLMVACGCMILVGYFSL. At 197 to 323 the chain is on the extracellular side; it reads DIFSNAEGDD…LKSSTFIGYY (127 aa). The residue at position 237 (S237) is a Phosphoserine. Residues 275–300 form a disordered region; sequence LLSPSSPHTKYDFEDENTSKNTVGEN. A helical transmembrane segment spans residues 324-344; it reads IVLGILQGVGLMYIYSVGFMV. At 345–398 the chain is on the cytoplasmic side; sequence QAQVSTPPLNQLPINAEKIQSLQVTLLSLLSFCGRLSSGPISDFLVKKFKAQRL. A helical membrane pass occupies residues 399–419; that stretch reads WNIVIASLLVFLASNKISHDF. Residues 420–437 are Extracellular-facing; the sequence is SSIEDPSLRASKSFKNIS. A helical transmembrane segment spans residues 438-458; sequence VCSAIFGYSFGVLFGTFPSIV. The Cytoplasmic portion of the chain corresponds to 459–469; it reads ADRFGTNGYST. The chain crosses the membrane as a helical span at residues 470 to 490; sequence LWGVLTTGGVFSVSVFTDILG. The Extracellular portion of the chain corresponds to 491 to 514; it reads RDFKANTGDDDGNCKKGVLCYSYT. Residues 515 to 535 form a helical membrane-spanning segment; the sequence is FMVTKYCAAFNLLFVLGIIGY. At 536-547 the chain is on the cytoplasmic side; sequence TYYRRRATANSL.

It localises to the membrane. This is an uncharacterized protein from Saccharomyces cerevisiae (strain ATCC 204508 / S288c) (Baker's yeast).